Consider the following 462-residue polypeptide: Proline--tRNA ligase (462 aa).

This sequence belongs to the class-II aminoacyl-tRNA synthetase family. ProS type 3 subfamily. Homodimer.

It is found in the cytoplasm. The catalysed reaction is tRNA(Pro) + L-proline + ATP = L-prolyl-tRNA(Pro) + AMP + diphosphate. In terms of biological role, catalyzes the attachment of proline to tRNA(Pro) in a two-step reaction: proline is first activated by ATP to form Pro-AMP and then transferred to the acceptor end of tRNA(Pro). This chain is Proline--tRNA ligase, found in Thermoplasma acidophilum (strain ATCC 25905 / DSM 1728 / JCM 9062 / NBRC 15155 / AMRC-C165).